We begin with the raw amino-acid sequence, 272 residues long: uncharacterized protein (272 aa).

Residues 193–250 (AFLLPNNSKGVEKSEENEDGVTDNDSSNVNSSTNESPNPTDINVCSNDDATDNTENNL) form a disordered region. Residues 215–233 (DNDSSNVNSSTNESPNPTD) show a composition bias toward low complexity. Positions 235–248 (NVCSNDDATDNTEN) are enriched in polar residues.

This sequence belongs to the pal1 family.

The protein resides in the cytoplasm. Its subcellular location is the nucleus. This is an uncharacterized protein from Schizosaccharomyces pombe (strain 972 / ATCC 24843) (Fission yeast).